The sequence spans 145 residues: Large ribosomal subunit protein uL11 (145 aa).

Belongs to the universal ribosomal protein uL11 family. Part of the ribosomal stalk of the 50S ribosomal subunit. Interacts with L10 and the large rRNA to form the base of the stalk. L10 forms an elongated spine to which L12 dimers bind in a sequential fashion forming a multimeric L10(L12)X complex. In terms of processing, one or more lysine residues are methylated.

In terms of biological role, forms part of the ribosomal stalk which helps the ribosome interact with GTP-bound translation factors. The protein is Large ribosomal subunit protein uL11 of Rickettsia africae (strain ESF-5).